The sequence spans 349 residues: Ribosomal RNA large subunit methyltransferase M (349 aa).

S-adenosyl-L-methionine contacts are provided by residues serine 183, 216–219 (APGG), aspartate 235, aspartate 255, and aspartate 271. Residue lysine 300 is the Proton acceptor of the active site.

It belongs to the class I-like SAM-binding methyltransferase superfamily. RNA methyltransferase RlmE family. RlmM subfamily. In terms of assembly, monomer.

The protein localises to the cytoplasm. The catalysed reaction is cytidine(2498) in 23S rRNA + S-adenosyl-L-methionine = 2'-O-methylcytidine(2498) in 23S rRNA + S-adenosyl-L-homocysteine + H(+). Its function is as follows. Catalyzes the 2'-O-methylation at nucleotide C2498 in 23S rRNA. The sequence is that of Ribosomal RNA large subunit methyltransferase M from Stutzerimonas stutzeri (strain A1501) (Pseudomonas stutzeri).